Here is a 48-residue protein sequence, read N- to C-terminus: ATP synthase protein 8 (48 aa).

A helical transmembrane segment spans residues 13 to 33; sequence LTYGFLLLIILLVLFSQFLLP.

The protein belongs to the ATPase protein 8 family. F-type ATPases have 2 components, CF(1) - the catalytic core - and CF(0) - the membrane proton channel.

Its subcellular location is the mitochondrion membrane. Mitochondrial membrane ATP synthase (F(1)F(0) ATP synthase or Complex V) produces ATP from ADP in the presence of a proton gradient across the membrane which is generated by electron transport complexes of the respiratory chain. F-type ATPases consist of two structural domains, F(1) - containing the extramembraneous catalytic core and F(0) - containing the membrane proton channel, linked together by a central stalk and a peripheral stalk. During catalysis, ATP synthesis in the catalytic domain of F(1) is coupled via a rotary mechanism of the central stalk subunits to proton translocation. Part of the complex F(0) domain. Minor subunit located with subunit a in the membrane. This is ATP synthase protein 8 (ATP8) from Wickerhamomyces canadensis (Yeast).